The chain runs to 228 residues: UPF0758 protein STER_1430 (228 aa).

The MPN domain occupies 103-225; the sequence is QIMSSQQVAR…YYSFREERED (123 aa). The Zn(2+) site is built by His174, His176, and Asp187. Positions 174–187 match the JAMM motif motif; the sequence is HNHPSGEAYPSRND.

It belongs to the UPF0758 family.

In Streptococcus thermophilus (strain ATCC BAA-491 / LMD-9), this protein is UPF0758 protein STER_1430.